Reading from the N-terminus, the 637-residue chain is Pentatricopeptide repeat-containing protein At1g12300, mitochondrial (637 aa).

The transit peptide at 1-95 directs the protein to the mitochondrion; it reads MVKLMIRRLS…PTVIDFSRLF (95 aa). PPR repeat units follow at residues 87 to 121, 122 to 156, 157 to 191, 192 to 226, 227 to 261, 262 to 296, 297 to 331, 332 to 366, 367 to 401, 402 to 436, 437 to 471, 472 to 506, 507 to 541, 542 to 576, and 577 to 611; these read TVID…GIAH, NLYT…GYEP, NTIT…GHKP, DLIT…GCQP, NAVT…NIKL, DAVK…GITT, NIIT…KINP, NVVT…GIAP, DTIT…GCDP, NIRT…GVVA, DTVT…KVPP, NIVT…KMEL, DIGI…GVKP, GVKT…GHAP, and DGWT…GFSV.

Belongs to the PPR family. P subfamily.

The protein localises to the mitochondrion. In Arabidopsis thaliana (Mouse-ear cress), this protein is Pentatricopeptide repeat-containing protein At1g12300, mitochondrial.